Here is a 316-residue protein sequence, read N- to C-terminus: Acetyl-coenzyme A carboxylase carboxyl transferase subunit alpha (316 aa).

Positions L36–E290 constitute a CoA carboxyltransferase C-terminal domain.

This sequence belongs to the AccA family. As to quaternary structure, acetyl-CoA carboxylase is a heterohexamer composed of biotin carboxyl carrier protein (AccB), biotin carboxylase (AccC) and two subunits each of ACCase subunit alpha (AccA) and ACCase subunit beta (AccD).

It localises to the cytoplasm. The catalysed reaction is N(6)-carboxybiotinyl-L-lysyl-[protein] + acetyl-CoA = N(6)-biotinyl-L-lysyl-[protein] + malonyl-CoA. It functions in the pathway lipid metabolism; malonyl-CoA biosynthesis; malonyl-CoA from acetyl-CoA: step 1/1. Component of the acetyl coenzyme A carboxylase (ACC) complex. First, biotin carboxylase catalyzes the carboxylation of biotin on its carrier protein (BCCP) and then the CO(2) group is transferred by the carboxyltransferase to acetyl-CoA to form malonyl-CoA. This Thermus thermophilus (strain ATCC 27634 / DSM 579 / HB8) protein is Acetyl-coenzyme A carboxylase carboxyl transferase subunit alpha.